Consider the following 242-residue polypeptide: Protein HTATIP2 (242 aa).

Ala-2 is modified (N-acetylalanine). Residues 2 to 25 (AETEALSKLREDFRMQNKSVFILG) form a required for interaction with elongation factor EEF1A1 region. The NADPH site is built by Ser-27, Gly-28, Glu-29, Thr-30, Arg-52, Arg-53, Leu-92, Gly-93, Tyr-143, Lys-147, Leu-170, and Arg-178. The active-site Proton acceptor is the Tyr-143. The active site involves Lys-147.

As to quaternary structure, monomer. Forms homodimers during oxidative stress. Interacts (via N-terminus) with elongation factor EEF1A1 (via middle-region); the interaction is direct and competes with EEF1A1 binding to guanyl-nucleotide exchange factor EEF1B2, thereby inhibiting GDP for GTP exchange and reactivation of EEF1A1. Interacts with nuclear transport receptors XPO4, IPO5/RANBP5, IPO7, IPO9 and KPNB1 as well as GCN1L1/GCN1 and LRPPRC probably through their HEAT repeats. Binds NCOA5/CIA. In terms of assembly, interacts (via N-terminus) with proteasome subunit PSMD4/s5a. (Microbial infection) Interacts with HIV-1 Tat (via activation domain). High levels in liver, lung, skeletal muscle, pancreas and placenta. Moderate levels in heart and kidney. Low levels in brain. Not expressed or low levels in variant small cell lung carcinomas, 33% of hepatocellular carcinomas and neuroblastomas. Levels are reduced in the heart of patients with hypertrophic cardiomyopathy and failing hearts.

It is found in the cytoplasm. Functionally, represses translation by preventing reactivation of elongation factor eEF1A. May also inhibit nuclear import by competing with nuclear import substrates for binding to a subset of nuclear transport receptors. Has additionally been proposed to act as a redox sensor involved in cellular oxidative stress surveillance. The polypeptide is Protein HTATIP2 (Homo sapiens (Human)).